A 344-amino-acid chain; its full sequence is Cell division protein ZipA (344 aa).

Residues 1–6 (MEDLQL) lie on the Periplasmic side of the membrane. Residues 7 to 27 (VLFVLGAIAIVAVLVHGFWSI) form a helical membrane-spanning segment. Residues 28 to 344 (RRQQPKSLKD…DYLHRIRANA (317 aa)) lie on the Cytoplasmic side of the membrane. Disordered regions lie at residues 75–94 (VRKA…PYLK) and 108–139 (QFKQ…ASRQ).

Belongs to the ZipA family. In terms of assembly, interacts with FtsZ via their C-terminal domains.

The protein resides in the cell inner membrane. In terms of biological role, essential cell division protein that stabilizes the FtsZ protofilaments by cross-linking them and that serves as a cytoplasmic membrane anchor for the Z ring. Also required for the recruitment to the septal ring of downstream cell division proteins. The sequence is that of Cell division protein ZipA from Shewanella oneidensis (strain ATCC 700550 / JCM 31522 / CIP 106686 / LMG 19005 / NCIMB 14063 / MR-1).